Consider the following 1161-residue polypeptide: DNA-directed RNA polymerase III subunit 2 (1161 aa).

The segment at 1104–1125 adopts a C4-type zinc-finger fold; it reads CRACGLLGYYNYKLKKAVCTTC.

This sequence belongs to the RNA polymerase beta chain family. As to quaternary structure, component of the RNA polymerase III (Pol III) complex consisting of 17 subunits.

The protein resides in the nucleus. The catalysed reaction is RNA(n) + a ribonucleoside 5'-triphosphate = RNA(n+1) + diphosphate. Its function is as follows. DNA-dependent RNA polymerase catalyzes the transcription of DNA into RNA using the four ribonucleoside triphosphates as substrates. Second largest core component of RNA polymerase III which synthesizes small RNAs, such as 5S rRNA and tRNAs. Proposed to contribute to the polymerase catalytic activity and forms the polymerase active center together with the largest subunit. Pol III is composed of mobile elements and NRPC2 is part of the core element with the central large cleft and probably a clamp element that moves to open and close the cleft. In terms of biological role, essential for the completion of the three rounds of mitosis in female megaspores required for the development of mature gametophytes. This Arabidopsis thaliana (Mouse-ear cress) protein is DNA-directed RNA polymerase III subunit 2.